The chain runs to 194 residues: MSEIKLIVGLGNPGDKYADTRHNAGEWLIDRLSRRFNFTLKDEAKFFGKTARTVIDGHEIRFLVPATFMNLSGKAIGALASFYRIRPEEILLAHDELDLPPGTVKIKQGGGHGGHNGLKDTIAQLGNNKNFYRLRIGIGHPGDRNLVTSYVLGKPSPADWALIDKALDEAVVCVEILLKDGITKATNRLNGFKA.

Y17 contributes to the tRNA binding site. Residue H22 is the Proton acceptor of the active site. TRNA contacts are provided by F68, N70, and N116.

It belongs to the PTH family. Monomer.

It is found in the cytoplasm. It carries out the reaction an N-acyl-L-alpha-aminoacyl-tRNA + H2O = an N-acyl-L-amino acid + a tRNA + H(+). Its function is as follows. Hydrolyzes ribosome-free peptidyl-tRNAs (with 1 or more amino acids incorporated), which drop off the ribosome during protein synthesis, or as a result of ribosome stalling. Catalyzes the release of premature peptidyl moieties from peptidyl-tRNA molecules trapped in stalled 50S ribosomal subunits, and thus maintains levels of free tRNAs and 50S ribosomes. The chain is Peptidyl-tRNA hydrolase from Actinobacillus succinogenes (strain ATCC 55618 / DSM 22257 / CCUG 43843 / 130Z).